The chain runs to 212 residues: Ras-related protein Rab-21 (212 aa).

Residues glycine 14–threonine 21, aspartate 62–glutamine 66, and asparagine 120–aspartate 123 contribute to the GTP site. A disordered region spans residues threonine 181–asparagine 212. A compositionally biased stretch (polar residues) spans aspartate 201–asparagine 212. 2 S-geranylgeranyl cysteine lipidation sites follow: cysteine 209 and cysteine 210.

The protein belongs to the small GTPase superfamily. Rab family. As to quaternary structure, interacts with LIM domain proteins limF and ChLim.

The protein resides in the cell membrane. Functionally, involved in the regulation of phagocytosis. This is Ras-related protein Rab-21 (rab21) from Dictyostelium discoideum (Social amoeba).